The chain runs to 314 residues: uncharacterized protein (314 aa).

Positions 39–146 (QENVDSDSTD…SDYSSDESNS (108 aa)) are disordered. The span at 56–76 (STKNVSRNIPKNIPKSISKNI) shows a compositional bias: polar residues. Positions 88–131 (IPKNVSKNIPKNVPKNVSKNIPKNIPKNVPNKSRNKYSNYSEDS) are enriched in low complexity. The segment covering 132–141 (NYSEDSDYSS) has biased composition (acidic residues).

This is an uncharacterized protein from Acanthamoeba polyphaga mimivirus (APMV).